A 235-amino-acid chain; its full sequence is uncharacterized protein (235 aa).

This sequence belongs to the UreF family.

Its subcellular location is the cytoplasm. It localises to the nucleus. Probably facilitates nickel incorporation. This is an uncharacterized protein from Schizosaccharomyces pombe (strain 972 / ATCC 24843) (Fission yeast).